The primary structure comprises 119 residues: Protein YdaY (119 aa).

In Escherichia coli (strain K12), this protein is Protein YdaY (ydaY).